Consider the following 678-residue polypeptide: Pescadillo homolog (678 aa).

A disordered region spans residues 265–289 (PQQQTKTNNTTKKSKSTTAAAAATT). Residues 269–289 (TKTNNTTKKSKSTTAAAAATT) show a composition bias toward low complexity. A BRCT domain is found at 352–442 (DVTTLFKGFH…LLLPYSEYTI (91 aa)). Disordered regions lie at residues 485–601 (TNAE…EDTK) and 626–678 (ATAN…KQKK). The span at 505-518 (SDGESDDEDDEDLE) shows a compositional bias: acidic residues. The span at 519-531 (HLETRYTEELRKE) shows a compositional bias: basic and acidic residues. Residues 541–574 (VDDDDEEEEDGEEDGEEEEEEEDGEEESESESES) are compositionally biased toward acidic residues. The stretch at 581–640 (VLTKKQRDELNKQKQAEEDTKLAELMIRKKDKWIYNKVKETNQQRATANQTLLEKRNKVE) forms a coiled coil. 2 stretches are compositionally biased toward basic and acidic residues: residues 585–601 (KQRD…EDTK) and 633–643 (LEKRNKVESGK). Positions 649 to 678 (VKVAPQPKKPAPLVKKSQQKQQQASKKQKK) are enriched in low complexity.

Belongs to the pescadillo family.

The protein localises to the nucleus. The protein resides in the nucleolus. It is found in the nucleoplasm. Required for maturation of ribosomal RNAs and formation of the large ribosomal subunit. The sequence is that of Pescadillo homolog from Dictyostelium discoideum (Social amoeba).